Consider the following 245-residue polypeptide: Dof zinc finger protein DOF3.2 (245 aa).

Residues 15–26 (SCSTQDYQNQKK) are compositionally biased toward polar residues. The segment at 15-41 (SCSTQDYQNQKKPLSATRPAPPEQSLR) is disordered. A Dof-type zinc finger spans residues 40–94 (LRCPRCDSTNTKFCYYNNYSLSQPRYFCKSCRRYWTKGGILRNIPIGGAYRKHKR). Zn(2+) is bound by residues Cys42, Cys45, Cys67, and Cys70. Residues 91-118 (KHKRSSSATKSLRTTPEPTMTHDGKSFP) are disordered. Polar residues predominate over residues 96–108 (SSATKSLRTTPEP).

Interacts with TCP14. The PEAR proteins (e.g. DOF2.4, DOF5.1, DOF3.2, DOF1.1, DOF5.6 and DOF5.3) form a short-range concentration gradient that peaks at protophloem sieve elements (PSE).

The protein resides in the nucleus. In terms of biological role, transcription factor that negatively affects seed germination and opposes TCP14 function in the regulation of a specific set of abscisic acid-related genes. The PEAR proteins (e.g. DOF2.4, DOF5.1, DOF3.2, DOF1.1, DOF5.6 and DOF5.3) activate gene expression that promotes radial growth of protophloem sieve elements. The sequence is that of Dof zinc finger protein DOF3.2 from Arabidopsis thaliana (Mouse-ear cress).